A 559-amino-acid chain; its full sequence is Transmembrane E3 ubiquitin-protein ligase FLY2 (559 aa).

An N-terminal signal peptide occupies residues 1–29; the sequence is MNNLGNFGVWGFGFFSLSIWFAVLQQANG. Residues 30–259 are Lumenal-facing; it reads LRPIRETARS…TSINVEVYYN (230 aa). A helical transmembrane segment spans residues 260-280; it reads KAVNYTLMVTFVSFLQVLLLI. Over 281-294 the chain is Cytoplasmic; the sequence is RQMEHSNTQSGAAK. Residues 295–315 form a helical membrane-spanning segment; it reads VSIVMIGQQAIMDSYLCLLHL. The Lumenal portion of the chain corresponds to 316 to 318; the sequence is TAG. Residues 319-339 traverse the membrane as a helical segment; that stretch reads ILVESLFNAFATAAFFKFVVF. Topologically, residues 340 to 370 are cytoplasmic; it reads SIFEMRYLLSIWKATRPSTSGEGWETMRREL. A helical transmembrane segment spans residues 371–391; that stretch reads SFLYSRFYGILLGGILLMYEF. The Lumenal portion of the chain corresponds to 392–394; the sequence is HNY. The chain crosses the membrane as a helical span at residues 395-415; that stretch reads MRPILLLMYSFWIPQIVANVV. At 416–423 the chain is on the cytoplasmic side; the sequence is RDSRKPLH. The helical transmembrane segment at 424–444 threads the bilayer; that stretch reads PYYILGMTVTRLAIPLYVFGC. Residues 445–458 are Lumenal-facing; that stretch reads PKNFMRVEPSKAWC. A helical transmembrane segment spans residues 459–479; sequence VSLCAFMGFQAGVLLLQHYFG. Topologically, residues 480-559 are cytoplasmic; that stretch reads SRCFVPRKLL…PTCRRPLPPA (80 aa). An RING-type; atypical zinc finger spans residues 509 to 553; sequence CVICMTTIDLRHRINDCMVTPCEHIFHSGCLQRWMDIKMECPTCR.

In terms of tissue distribution, highly expressed in stems. Expressed in root xylem and seed coat.

It localises to the endomembrane system. It catalyses the reaction S-ubiquitinyl-[E2 ubiquitin-conjugating enzyme]-L-cysteine + [acceptor protein]-L-lysine = [E2 ubiquitin-conjugating enzyme]-L-cysteine + N(6)-ubiquitinyl-[acceptor protein]-L-lysine.. Its pathway is protein modification; protein ubiquitination. Functionally, E3 ubiquitin-protein ligase that may be involved in xylem development. This Arabidopsis thaliana (Mouse-ear cress) protein is Transmembrane E3 ubiquitin-protein ligase FLY2.